Consider the following 648-residue polypeptide: ATP-dependent zinc metalloprotease FtsH 4 (648 aa).

Residues 1–6 lie on the Cytoplasmic side of the membrane; that stretch reads MKQSHK. Residues 7-27 form a helical membrane-spanning segment; sequence TLLLWVLLIMMFLAIWQFLSP. The Periplasmic portion of the chain corresponds to 28-111; that stretch reads DSRPATQVAF…VFFEKEDTSP (84 aa). The chain crosses the membrane as a helical span at residues 112–132; sequence FWPGAIMYLLPTVFLLVMFYL. Topologically, residues 133-648 are cytoplasmic; the sequence is FMRQLQAGGG…FGTPKPAPST (516 aa). 205 to 212 serves as a coordination point for ATP; it reads GPPGTGKT. Position 427 (H427) interacts with Zn(2+). Residue E428 is part of the active site. Zn(2+) is bound by residues H431 and D504. The segment at 622-648 is disordered; sequence YSDRDRAAKEKRRAASIFGTPKPAPST.

In the central section; belongs to the AAA ATPase family. The protein in the C-terminal section; belongs to the peptidase M41 family. In terms of assembly, homohexamer. The cofactor is Zn(2+).

It is found in the cell inner membrane. Acts as a processive, ATP-dependent zinc metallopeptidase for both cytoplasmic and membrane proteins. Plays a role in the quality control of integral membrane proteins. The protein is ATP-dependent zinc metalloprotease FtsH 4 of Sorangium cellulosum (strain So ce56) (Polyangium cellulosum (strain So ce56)).